Here is a 209-residue protein sequence, read N- to C-terminus: Prolactin (209 aa).

The first 24 residues, 1–24 (MAQRFKGSNLFLTALLCLASQGHA), serve as a signal peptide directing secretion. 2 disulfides stabilise this stretch: Cys70/Cys184 and Cys201/Cys209.

Belongs to the somatotropin/prolactin family.

The protein resides in the secreted. This Anguilla japonica (Japanese eel) protein is Prolactin (prl).